A 436-amino-acid polypeptide reads, in one-letter code: Mitochondrial substrate carrier family protein Y (436 aa).

The segment at M1–K102 is disordered. Over M1–N137 the chain is Mitochondrial intermembrane. Solcar repeat units follow at residues S135 to Y226 and H236 to Q334. The chain crosses the membrane as a helical span at residues V138–L158. Residues D159–G194 are Mitochondrial matrix-facing. Residues V195–I215 form a helical membrane-spanning segment. The Mitochondrial intermembrane segment spans residues Q216 to T238. A helical membrane pass occupies residues L239–V259. The Mitochondrial matrix portion of the chain corresponds to D260–T313. A helical membrane pass occupies residues L314–Q334. The Mitochondrial intermembrane segment spans residues F335–E347. Residues F348–G368 traverse the membrane as a helical segment. One copy of the Solcar 3 repeat lies at K350 to L436. Residues L369–S413 lie on the Mitochondrial matrix side of the membrane. The chain crosses the membrane as a helical span at residues A414–I434. The Mitochondrial intermembrane segment spans residues N435–L436.

This sequence belongs to the mitochondrial carrier (TC 2.A.29) family.

Its subcellular location is the mitochondrion inner membrane. In terms of biological role, mitochondrial solute carriers shuttle metabolites, nucleotides, and cofactors through the mitochondrial inner membrane. This chain is Mitochondrial substrate carrier family protein Y (mcfY), found in Dictyostelium discoideum (Social amoeba).